Consider the following 555-residue polypeptide: Phosphomethylpyrimidine synthase (555 aa).

Residues Asn-191, Met-220, Tyr-249, His-285, 305-307 (SRG), 346-349 (DGLR), and Glu-385 contribute to the substrate site. His-389 lines the Zn(2+) pocket. Tyr-412 contacts substrate. His-453 is a binding site for Zn(2+). Residues Cys-533, Cys-536, and Cys-541 each contribute to the [4Fe-4S] cluster site.

The protein belongs to the ThiC family. As to quaternary structure, homodimer. It depends on [4Fe-4S] cluster as a cofactor.

It carries out the reaction 5-amino-1-(5-phospho-beta-D-ribosyl)imidazole + S-adenosyl-L-methionine = 4-amino-2-methyl-5-(phosphooxymethyl)pyrimidine + CO + 5'-deoxyadenosine + formate + L-methionine + 3 H(+). It participates in cofactor biosynthesis; thiamine diphosphate biosynthesis. Its function is as follows. Catalyzes the synthesis of the hydroxymethylpyrimidine phosphate (HMP-P) moiety of thiamine from aminoimidazole ribotide (AIR) in a radical S-adenosyl-L-methionine (SAM)-dependent reaction. The sequence is that of Phosphomethylpyrimidine synthase from Ehrlichia ruminantium (strain Welgevonden).